The chain runs to 379 residues: Chaperone protein DnaJ (379 aa).

Residues 5–69 form the J domain; sequence EFYDRLGVSK…QKRAAYDQYG (65 aa). Residues 135–217 form a CR-type zinc finger; the sequence is GAEKEVSYNR…CHGTGHEKKT (83 aa). Residues C148, C151, C165, C168, C191, C194, C205, and C208 each contribute to the Zn(2+) site. 4 CXXCXGXG motif repeats span residues 148–155, 165–172, 191–198, and 205–212; these read CHTCSGSG, CQKCHGSG, CDVCQGSG, and CPTCHGTG.

Belongs to the DnaJ family. Homodimer. It depends on Zn(2+) as a cofactor.

It localises to the cytoplasm. Its function is as follows. Participates actively in the response to hyperosmotic and heat shock by preventing the aggregation of stress-denatured proteins and by disaggregating proteins, also in an autonomous, DnaK-independent fashion. Unfolded proteins bind initially to DnaJ; upon interaction with the DnaJ-bound protein, DnaK hydrolyzes its bound ATP, resulting in the formation of a stable complex. GrpE releases ADP from DnaK; ATP binding to DnaK triggers the release of the substrate protein, thus completing the reaction cycle. Several rounds of ATP-dependent interactions between DnaJ, DnaK and GrpE are required for fully efficient folding. Also involved, together with DnaK and GrpE, in the DNA replication of plasmids through activation of initiation proteins. The chain is Chaperone protein DnaJ from Streptococcus agalactiae serotype V (strain ATCC BAA-611 / 2603 V/R).